Reading from the N-terminus, the 294-residue chain is Epimerase family protein SDR39U1 (294 aa).

Residues 31 to 32 (SR), 58 to 59 (LA), Glu77, Arg82, and Val160 each bind NADP(+).

It belongs to the NAD(P)-dependent epimerase/dehydratase family. SDR39U1 subfamily.

Putative NADP-dependent oxidoreductase. This is Epimerase family protein SDR39U1 (SDR39U1) from Bos taurus (Bovine).